The primary structure comprises 309 residues: Porphobilinogen deaminase (309 aa).

C244 carries the post-translational modification S-(dipyrrolylmethanemethyl)cysteine.

Belongs to the HMBS family. In terms of assembly, monomer. It depends on dipyrromethane as a cofactor.

It carries out the reaction 4 porphobilinogen + H2O = hydroxymethylbilane + 4 NH4(+). Its pathway is porphyrin-containing compound metabolism; protoporphyrin-IX biosynthesis; coproporphyrinogen-III from 5-aminolevulinate: step 2/4. Functionally, tetrapolymerization of the monopyrrole PBG into the hydroxymethylbilane pre-uroporphyrinogen in several discrete steps. The sequence is that of Porphobilinogen deaminase from Agrobacterium fabrum (strain C58 / ATCC 33970) (Agrobacterium tumefaciens (strain C58)).